We begin with the raw amino-acid sequence, 823 residues long: Aminopeptidase O (823 aa).

Zn(2+) is bound at residue H481. Catalysis depends on E482, which acts as the Proton acceptor. Residues H485 and E504 each contribute to the Zn(2+) site. Positions 693 to 703 (RRPRKRKRGKR) match the Nucleolar localization signal motif.

This sequence belongs to the peptidase M1 family. It depends on Zn(2+) as a cofactor. In terms of tissue distribution, expressed in testis, heart, brain, lung, liver, skeletal muscle, kidney and ovary. Expressed in vascular tissues.

It localises to the nucleus. The protein resides in the nucleolus. Its subcellular location is the cytoplasm. Its function is as follows. Aminopeptidase which catalyzes the hydrolysis of amino acid residues from the N-terminus of peptide or protein substrates. The protein is Aminopeptidase O (Aopep) of Mus musculus (Mouse).